Reading from the N-terminus, the 426-residue chain is Serine--tRNA ligase (426 aa).

233 to 235 (TAE) is a binding site for L-serine. Position 264 to 266 (264 to 266 (RSE)) interacts with ATP. Glu287 contributes to the L-serine binding site. 351–354 (EISS) provides a ligand contact to ATP. L-serine is bound at residue Ser387.

It belongs to the class-II aminoacyl-tRNA synthetase family. Type-1 seryl-tRNA synthetase subfamily. In terms of assembly, homodimer. The tRNA molecule binds across the dimer.

It localises to the cytoplasm. It carries out the reaction tRNA(Ser) + L-serine + ATP = L-seryl-tRNA(Ser) + AMP + diphosphate + H(+). The enzyme catalyses tRNA(Sec) + L-serine + ATP = L-seryl-tRNA(Sec) + AMP + diphosphate + H(+). It functions in the pathway aminoacyl-tRNA biosynthesis; selenocysteinyl-tRNA(Sec) biosynthesis; L-seryl-tRNA(Sec) from L-serine and tRNA(Sec): step 1/1. In terms of biological role, catalyzes the attachment of serine to tRNA(Ser). Is also able to aminoacylate tRNA(Sec) with serine, to form the misacylated tRNA L-seryl-tRNA(Sec), which will be further converted into selenocysteinyl-tRNA(Sec). The sequence is that of Serine--tRNA ligase from Pseudomonas putida (strain GB-1).